The following is a 104-amino-acid chain: Precursor of CEP11 (104 aa).

The first 27 residues, 1 to 27 (MAKTRRVIYLFLTIVLLFCELIDEAQG), serve as a signal peptide directing secretion. Positions 28–85 (SRFRCHHSEDYSCKKRSSHHHHHHHHHQQQQHHHKDTPPEELQGSIKTRRSKDIYGLN) are excised as a propeptide. The segment at 37–104 (DYSCKKRSSH…SPGVGHLIKT (68 aa)) is disordered. Residues 41–62 (KKRSSHHHHHHHHHQQQQHHHK) show a composition bias toward basic residues. A hydroxyproline mark is found at Pro-92 and Pro-96. A propeptide spanning residues 101–104 (LIKT) is cleaved from the precursor.

It belongs to the C-terminally encoded plant signaling peptide (CEP) family. As to quaternary structure, interacts with CEP receptors (e.g. CEPR1 and CEPR2). The mature small signaling peptide is generated by proteolytic processing of the longer precursor. As to expression, expressed in lateral root primordia and in lateral roots excluding the meristem region.

It localises to the secreted. The protein resides in the extracellular space. Its subcellular location is the apoplast. Extracellular signaling peptide that may regulate primary root growth rate and systemic nitrogen (N)-demand signaling. Mediates up-regulation of genes involved in N uptake and assimilation pathways. This Arabidopsis thaliana (Mouse-ear cress) protein is Precursor of CEP11.